Consider the following 95-residue polypeptide: Small ribosomal subunit protein bS6 (95 aa).

Belongs to the bacterial ribosomal protein bS6 family.

Binds together with bS18 to 16S ribosomal RNA. In Symbiobacterium thermophilum (strain DSM 24528 / JCM 14929 / IAM 14863 / T), this protein is Small ribosomal subunit protein bS6.